The sequence spans 268 residues: Protein CDV3 homolog (268 aa).

Residues 40 to 50 (KREVVKPKKPE) are compositionally biased toward basic and acidic residues. Disordered stretches follow at residues 40–145 (KREV…ERVG) and 184–268 (QQAG…DEAS). Positions 51–61 (AAAGGVAVVGE) are enriched in low complexity. The segment covering 76-85 (VEEEWKEFEE) has biased composition (acidic residues). Positions 98–107 (QLSTITAQES) are enriched in polar residues. Positions 123 to 132 (NYDEDDEDSN) are enriched in acidic residues. Over residues 221–239 (RPEEQRKKKNEPAFEEVRH) the composition is skewed to basic and acidic residues.

This sequence belongs to the CDV3 family.

The protein is Protein CDV3 homolog of Drosophila yakuba (Fruit fly).